Consider the following 412-residue polypeptide: Tyrosine--tRNA ligase (412 aa).

Tyr31 lines the L-tyrosine pocket. The 'HIGH' region motif lies at 36 to 45 (PTAASLHIGH). L-tyrosine is bound by residues Tyr162 and Gln166. The short motif at 222 to 226 (KIGKT) is the 'KMSKS' region element. Residue Lys225 participates in ATP binding. The S4 RNA-binding domain occupies 345-412 (KRWIDLFVGV…KKKKLVLHLI (68 aa)).

The protein belongs to the class-I aminoacyl-tRNA synthetase family. TyrS type 1 subfamily. As to quaternary structure, homodimer.

It is found in the cytoplasm. It carries out the reaction tRNA(Tyr) + L-tyrosine + ATP = L-tyrosyl-tRNA(Tyr) + AMP + diphosphate + H(+). Functionally, catalyzes the attachment of tyrosine to tRNA(Tyr) in a two-step reaction: tyrosine is first activated by ATP to form Tyr-AMP and then transferred to the acceptor end of tRNA(Tyr). The sequence is that of Tyrosine--tRNA ligase from Chlamydia caviae (strain ATCC VR-813 / DSM 19441 / 03DC25 / GPIC) (Chlamydophila caviae).